A 196-amino-acid chain; its full sequence is SPRY domain-containing protein 7 (196 aa).

The B30.2/SPRY domain maps to 1 to 184 (MAASVFCCLR…FSEFYHTPPP (184 aa)).

This chain is SPRY domain-containing protein 7 (SPRYD7), found in Gallus gallus (Chicken).